An 88-amino-acid chain; its full sequence is Small ribosomal subunit protein uS19 (88 aa).

It belongs to the universal ribosomal protein uS19 family.

Protein S19 forms a complex with S13 that binds strongly to the 16S ribosomal RNA. This is Small ribosomal subunit protein uS19 from Chlamydia felis (strain Fe/C-56) (Chlamydophila felis).